Consider the following 159-residue polypeptide: 3-hydroxyacyl-[acyl-carrier-protein] dehydratase FabZ (159 aa).

The active site involves H59.

This sequence belongs to the thioester dehydratase family. FabZ subfamily.

The protein localises to the cytoplasm. The catalysed reaction is a (3R)-hydroxyacyl-[ACP] = a (2E)-enoyl-[ACP] + H2O. Functionally, involved in unsaturated fatty acids biosynthesis. Catalyzes the dehydration of short chain beta-hydroxyacyl-ACPs and long chain saturated and unsaturated beta-hydroxyacyl-ACPs. The protein is 3-hydroxyacyl-[acyl-carrier-protein] dehydratase FabZ of Caulobacter vibrioides (strain ATCC 19089 / CIP 103742 / CB 15) (Caulobacter crescentus).